Consider the following 152-residue polypeptide: UPF0266 membrane protein YobD (152 aa).

Transmembrane regions (helical) follow at residues 6-26 (LLLI…QFIM), 45-65 (VDSV…VTSH), and 67-87 (AQMT…IFWI).

Belongs to the UPF0266 family.

It localises to the cell inner membrane. This chain is UPF0266 membrane protein YobD, found in Salmonella paratyphi C (strain RKS4594).